The following is a 1479-amino-acid chain: C-type mannose receptor 2 (1479 aa).

The N-terminal stretch at 1-30 is a signal peptide; that stretch reads MVPIRPALAPWPRHLLRCVLLLGGLRLGHP. Residues 31-1413 lie on the Extracellular side of the membrane; that stretch reads ADSAAALLEP…SAALPESPVA (1383 aa). The 154-residue stretch at 37–190 folds into the Ricin B-type lectin domain; that stretch reads LLEPDVFLIF…SHGKPCTIPF (154 aa). A disulfide bridge connects residues Cys92 and Cys111. N-linked (GlcNAc...) asparagine glycans are attached at residues Asn101 and Asn139. Residues 181–229 form the Fibronectin type-II domain; the sequence is SHGKPCTIPFKYDNQWFHGCTSTGREDGHLWCATTQDYGKDERWGFCPI. Cystine bridges form between Cys186-Cys212, Cys200-Cys227, Cys265-Cys358, and Cys334-Cys350. The 117-residue stretch at 243–359 folds into the C-type lectin 1 domain; it reads LTDSCYQFNF…CSIALPYVCK (117 aa). The N-linked (GlcNAc...) asparagine glycan is linked to Asn363. 7 C-type lectin domains span residues 388–504, 527–643, 677–808, 831–950, 978–1106, 1131–1242, and 1271–1391; these read FQGH…SICK, HSPS…RYIC, KLRH…WICK, FQEA…YICK, FLNK…GFIC, YLNH…GAVC, and FREH…GVVC. 7 disulfides stabilise this stretch: Cys409–Cys503, Cys480–Cys495, Cys617–Cys634, Cys703–Cys807, Cys784–Cys799, Cys852–Cys949, and Cys926–Cys941. Asn1028 carries N-linked (GlcNAc...) asparagine glycosylation. Cys1077 and Cys1097 are joined by a disulfide. Residue Lys1141 forms a Glycyl lysine isopeptide (Lys-Gly) (interchain with G-Cter in SUMO1) linkage. Cys1219 and Cys1233 form a disulfide bridge. A glycan (N-linked (GlcNAc...) asparagine) is linked at Asn1348. Cysteines 1367 and 1382 form a disulfide. Residues 1414 to 1434 traverse the membrane as a helical segment; it reads LVVVLTAVLLLLALMTAALIL. At 1435 to 1479 the chain is on the cytoplasmic side; that stretch reads YRRRQSAERGSFEGARYSRSSHSGPAEATEKNILVSDMEMNEQQE. Positions 1446–1479 are disordered; that stretch reads FEGARYSRSSHSGPAEATEKNILVSDMEMNEQQE.

In terms of assembly, interacts directly with PLAUR/UPAR and PLAU/pro-UPA to form a tri-molecular complex. Interacts with collagen V and with C-terminal region of type I collagen/COL1A1. In terms of processing, phosphorylated. In terms of tissue distribution, highly expressed in heart, lung and kidney, but little or no expression in brain, thymus or adult liver. Expressed at highly endothelialized sites such as those in choroid plexus and kidney glomerulai as well as in chondrocytes in cartilaginous regions of the embryo.

The protein localises to the membrane. Its function is as follows. May play a role as endocytotic lectin receptor displaying calcium-dependent lectin activity. Internalizes glycosylated ligands from the extracellular space for release in an endosomal compartment via clathrin-mediated endocytosis. May be involved in plasminogen activation system controlling the extracellular level of PLAUR/PLAU, and thus may regulate protease activity at the cell surface. May contribute to cellular uptake, remodeling and degradation of extracellular collagen matrices. May participate in remodeling of extracellular matrix cooperating with the matrix metalloproteinases (MMPs). The chain is C-type mannose receptor 2 (Mrc2) from Mus musculus (Mouse).